A 352-amino-acid polypeptide reads, in one-letter code: Small ribosomal subunit biogenesis GTPase RsgA (352 aa).

Residues Met-1–His-15 show a composition bias toward basic residues. The tract at residues Met-1 to His-26 is disordered. Residues Glu-106–Phe-274 form the CP-type G domain. GTP contacts are provided by residues Asn-162–Asp-165 and Gly-216–Ser-224. Residues Cys-298, Cys-303, His-305, and Cys-311 each coordinate Zn(2+).

Belongs to the TRAFAC class YlqF/YawG GTPase family. RsgA subfamily. Monomer. Associates with 30S ribosomal subunit, binds 16S rRNA. Requires Zn(2+) as cofactor.

It is found in the cytoplasm. In terms of biological role, one of several proteins that assist in the late maturation steps of the functional core of the 30S ribosomal subunit. Helps release RbfA from mature subunits. May play a role in the assembly of ribosomal proteins into the subunit. Circularly permuted GTPase that catalyzes slow GTP hydrolysis, GTPase activity is stimulated by the 30S ribosomal subunit. This chain is Small ribosomal subunit biogenesis GTPase RsgA, found in Mannheimia succiniciproducens (strain KCTC 0769BP / MBEL55E).